The following is a 571-amino-acid chain: Fumarate reductase (cytochrome) (571 aa).

Positions 8, 14, 17, 18, 36, 39, 40, 52, 58, 61, 68, 71, 72, 74, 75, 82, 85, 86, 91, and 94 each coordinate heme c. Residues 118-571 (ALASAPHDTV…EEAAKYSKKN (454 aa)) are flavoprotein-like. Positions 137, 156, 164, 165, 169, 170, 171, 278, and 338 each coordinate FAD. Gly-170 provides a ligand contact to succinate. Succinate is bound by residues His-365, Thr-377, and Glu-378. Residues Thr-377, Glu-378, and Arg-402 each contribute to the fumarate site. Arg-402 (proton donor) is an active-site residue. Heme c is bound at residue Lys-431. His-504 provides a ligand contact to succinate. His-504 provides a ligand contact to fumarate. Positions 505 and 534 each coordinate FAD. 2 residues coordinate succinate: Arg-544 and Gly-547. Fumarate is bound by residues Arg-544 and Gly-547. FAD is bound by residues Ala-549 and Ile-550.

In terms of assembly, monomer. FAD serves as cofactor. It depends on heme c as a cofactor.

Its subcellular location is the periplasm. The enzyme catalyses 2 Fe(III)-[cytochrome c] + succinate = fumarate + 2 Fe(II)-[cytochrome c] + 2 H(+). In terms of biological role, flavocytochrome that catalyzes the reduction of fumarate to succinate. Is essential for fumarate respiration during anaerobic growth, acting as the terminal reductase. Receives electrons from the membrane-bound tetraheme c-type cytochrome CymA. In vitro, can use the artificial electron donor methyl viologen. The polypeptide is Fumarate reductase (cytochrome) (fccA) (Shewanella frigidimarina).